Here is a 445-residue protein sequence, read N- to C-terminus: Signal recognition particle 54 kDa protein (445 aa).

GTP-binding positions include 102 to 109 (GVQGSGKT), 184 to 188 (DTAGR), and 244 to 247 (TKMD).

Belongs to the GTP-binding SRP family. SRP54 subfamily. As to quaternary structure, part of the signal recognition particle protein translocation system, which is composed of SRP and FtsY. Archaeal SRP consists of a 7S RNA molecule of 300 nucleotides and two protein subunits: SRP54 and SRP19.

It localises to the cytoplasm. The enzyme catalyses GTP + H2O = GDP + phosphate + H(+). In terms of biological role, involved in targeting and insertion of nascent membrane proteins into the cytoplasmic membrane. Binds to the hydrophobic signal sequence of the ribosome-nascent chain (RNC) as it emerges from the ribosomes. The SRP-RNC complex is then targeted to the cytoplasmic membrane where it interacts with the SRP receptor FtsY. The protein is Signal recognition particle 54 kDa protein of Sulfurisphaera tokodaii (strain DSM 16993 / JCM 10545 / NBRC 100140 / 7) (Sulfolobus tokodaii).